Here is a 255-residue protein sequence, read N- to C-terminus: 4-diphosphocytidyl-2-C-methyl-D-erythritol kinase (255 aa).

The active site involves lysine 6. Residue 95–105 participates in ATP binding; it reads PVCAGLGGGSS. The active site involves aspartate 137.

The protein belongs to the GHMP kinase family. IspE subfamily.

It catalyses the reaction 4-CDP-2-C-methyl-D-erythritol + ATP = 4-CDP-2-C-methyl-D-erythritol 2-phosphate + ADP + H(+). It functions in the pathway isoprenoid biosynthesis; isopentenyl diphosphate biosynthesis via DXP pathway; isopentenyl diphosphate from 1-deoxy-D-xylulose 5-phosphate: step 3/6. Its function is as follows. Catalyzes the phosphorylation of the position 2 hydroxy group of 4-diphosphocytidyl-2C-methyl-D-erythritol. The sequence is that of 4-diphosphocytidyl-2-C-methyl-D-erythritol kinase from Campylobacter jejuni subsp. jejuni serotype O:23/36 (strain 81-176).